The primary structure comprises 542 residues: CTP synthase (542 aa).

The interval 1 to 264 (MKFIFITGGV…AKLIINKLKL (264 aa)) is amidoligase domain. Residue serine 12 coordinates CTP. UTP is bound at residue serine 12. An ATP-binding site is contributed by 13–18 (SLGKGI). Residue tyrosine 53 participates in L-glutamine binding. ATP is bound at residue aspartate 70. Mg(2+) contacts are provided by aspartate 70 and glutamate 138. CTP-binding positions include 145–147 (DIE), 185–190 (KTKPTQ), and lysine 221. Residues 185-190 (KTKPTQ) and lysine 221 each bind UTP. 237–239 (KDA) lines the ATP pocket. Residues 298 to 541 (YIMLKDAYTS…VKSALDKKLK (244 aa)) form the Glutamine amidotransferase type-1 domain. L-glutamine is bound at residue glycine 359. The active-site Nucleophile; for glutamine hydrolysis is the cysteine 386. Residues 387 to 390 (LGMQ), glutamate 410, and arginine 467 contribute to the L-glutamine site. Residues histidine 514 and glutamate 516 contribute to the active site.

Belongs to the CTP synthase family. Homotetramer.

The enzyme catalyses UTP + L-glutamine + ATP + H2O = CTP + L-glutamate + ADP + phosphate + 2 H(+). It carries out the reaction L-glutamine + H2O = L-glutamate + NH4(+). It catalyses the reaction UTP + NH4(+) + ATP = CTP + ADP + phosphate + 2 H(+). The protein operates within pyrimidine metabolism; CTP biosynthesis via de novo pathway; CTP from UDP: step 2/2. Its activity is regulated as follows. Allosterically activated by GTP, when glutamine is the substrate; GTP has no effect on the reaction when ammonia is the substrate. The allosteric effector GTP functions by stabilizing the protein conformation that binds the tetrahedral intermediate(s) formed during glutamine hydrolysis. Inhibited by the product CTP, via allosteric rather than competitive inhibition. In terms of biological role, catalyzes the ATP-dependent amination of UTP to CTP with either L-glutamine or ammonia as the source of nitrogen. Regulates intracellular CTP levels through interactions with the four ribonucleotide triphosphates. The polypeptide is CTP synthase (Methanococcus aeolicus (strain ATCC BAA-1280 / DSM 17508 / OCM 812 / Nankai-3)).